Reading from the N-terminus, the 420-residue chain is 4-hydroxy-3-methylbut-2-en-1-yl diphosphate synthase (flavodoxin) (420 aa).

[4Fe-4S] cluster-binding residues include cysteine 307, cysteine 310, cysteine 353, and glutamate 360.

This sequence belongs to the IspG family. The cofactor is [4Fe-4S] cluster.

It catalyses the reaction (2E)-4-hydroxy-3-methylbut-2-enyl diphosphate + oxidized [flavodoxin] + H2O + 2 H(+) = 2-C-methyl-D-erythritol 2,4-cyclic diphosphate + reduced [flavodoxin]. It participates in isoprenoid biosynthesis; isopentenyl diphosphate biosynthesis via DXP pathway; isopentenyl diphosphate from 1-deoxy-D-xylulose 5-phosphate: step 5/6. Converts 2C-methyl-D-erythritol 2,4-cyclodiphosphate (ME-2,4cPP) into 1-hydroxy-2-methyl-2-(E)-butenyl 4-diphosphate. The protein is 4-hydroxy-3-methylbut-2-en-1-yl diphosphate synthase (flavodoxin) of Brucella suis (strain ATCC 23445 / NCTC 10510).